We begin with the raw amino-acid sequence, 332 residues long: 2,3-diketo-L-gulonate reductase (332 aa).

Residue His44 is the Proton donor of the active site. Residues 168–174 (ITMVDMS), 224–225 (WK), and 304–306 (GHE) contribute to the NAD(+) site.

Belongs to the LDH2/MDH2 oxidoreductase family. DlgD subfamily. In terms of assembly, homodimer.

It is found in the cytoplasm. The enzyme catalyses 3-dehydro-L-gulonate + NAD(+) = 2,3-dioxo-L-gulonate + NADH + H(+). It carries out the reaction 3-dehydro-L-gulonate + NADP(+) = 2,3-dioxo-L-gulonate + NADPH + H(+). Its function is as follows. Catalyzes the reduction of 2,3-diketo-L-gulonate in the presence of NADH, to form 3-keto-L-gulonate. In Mannheimia succiniciproducens (strain KCTC 0769BP / MBEL55E), this protein is 2,3-diketo-L-gulonate reductase.